We begin with the raw amino-acid sequence, 337 residues long: Oligopeptide transport ATP-binding protein OppD (337 aa).

An ABC transporter domain is found at 20–269; sequence LNVKDLRVTF…PVHPYSIGLL (250 aa). 56–63 is an ATP binding site; the sequence is GESGSGKS.

It belongs to the ABC transporter superfamily. In terms of assembly, the complex is composed of two ATP-binding proteins (OppD and OppF), two transmembrane proteins (OppB and OppC) and a solute-binding protein (OppA or MppA).

The protein resides in the cell inner membrane. The catalysed reaction is a [peptide](out) + ATP + H2O = a [peptide](in) + ADP + phosphate + H(+). It catalyses the reaction L-alanyl-gamma-D-glutamyl-meso-2,6-diaminopimelate(out) + ATP + H2O = L-alanyl-gamma-D-glutamyl-meso-2,6-diaminopimelate(in) + ADP + phosphate + H(+). Part of the ABC transporter complex OppABCDF involved in the uptake of oligopeptides and of the ABC transporter complex MppA-OppBCDF involved in the uptake of the cell wall murein tripeptide L-alanyl-gamma-D-glutamyl-meso-diaminopimelate. Probably responsible for energy coupling to the transport system. Plays an important nutritional role and is involved in the recycling of cell wall peptides. This is Oligopeptide transport ATP-binding protein OppD (oppD) from Escherichia coli (strain K12).